Consider the following 856-residue polypeptide: Leucine--tRNA ligase (856 aa).

The short motif at proline 53–histidine 63 is the 'HIGH' region element. Positions lysine 622 to serine 626 match the 'KMSKS' region motif. Residue lysine 625 participates in ATP binding.

It belongs to the class-I aminoacyl-tRNA synthetase family.

Its subcellular location is the cytoplasm. The enzyme catalyses tRNA(Leu) + L-leucine + ATP = L-leucyl-tRNA(Leu) + AMP + diphosphate. The polypeptide is Leucine--tRNA ligase (Prochlorococcus marinus (strain MIT 9301)).